A 383-amino-acid polypeptide reads, in one-letter code: Adaptive-response sensory kinase SasA (383 aa).

Residues 152-365 (MVAHELRTPL…CFTFTVPIWQ (214 aa)) form the Histidine kinase domain. H155 is modified (phosphohistidine; by autocatalysis).

Homooligomerizes. Interacts with KaiC. Participates in the KaiABC clock complex, whose core is composed of a KaiC homohexamer, 6 KaiB and up to 6 KaiA dimers. SasA and KaiB(fs) compete to bind to KaiC.

The catalysed reaction is ATP + protein L-histidine = ADP + protein N-phospho-L-histidine.. Its function is as follows. Member of the two-component regulatory system SasA/RpaA involved in genome-wide circadian gene expression. One of several clock output pathways. Participates in the Kai clock protein complex, the main circadian regulator in cyanobacteria, via its interaction with KaiC. KaiC enhances the autophosphorylation activity of SasA, which then transfers its phosphate group to RpaA to activate it. In addition to its output function, recruits fold-shifted KaiB (KaiB(fs)) to KaiC to cooperatively form the KaiB(6):KaiC(6) complex (independent of SasA kinase activity). Required for robustness of the circadian rhythm of gene expression and is involved in clock output, also required for adaptation to light/dark cycles. The sequence is that of Adaptive-response sensory kinase SasA from Synechococcus sp. (strain CC9902).